The sequence spans 97 residues: Large ribosomal subunit protein eL21 (97 aa).

Residues 1 to 26 (MQKSEGFRSKTRYKLQKHPRQKGMAP) are disordered. Residues 9–21 (SKTRYKLQKHPRQ) are compositionally biased toward basic residues.

The protein belongs to the eukaryotic ribosomal protein eL21 family.

This Methanococcus maripaludis (strain C5 / ATCC BAA-1333) protein is Large ribosomal subunit protein eL21.